Consider the following 465-residue polypeptide: Tapasin (465 aa).

An N-terminal signal peptide occupies residues 1 to 23 (MKPLLLLVAVALGLATVVSVVSA). Residues 24-416 (GPEAIECWFV…GFSGPSIEDG (393 aa)) lie on the Lumenal side of the membrane. Cysteine 30 and cysteine 94 form a disulfide bridge. N-linked (GlcNAc...) asparagine glycosylation occurs at asparagine 256. One can recognise an Ig-like C1-type domain in the interval 295–402 (PRVSLTPAPV…PASGRSADVT (108 aa)). An intrachain disulfide couples cysteine 318 to cysteine 385. A helical membrane pass occupies residues 417–437 (IGLFLSAFLLLGLLKVLGWLA). Residues 438 to 465 (AYWTIPEVSKEKATAASLTIPRNSKKSQ) lie on the Cytoplasmic side of the membrane.

Heterodimer with PDIA3; disulfide-linked. Obligatory mediator for the interaction between newly assembled MHC class I molecules, calreticulin, PDIA3 and TAP. Up to 4 MHC class I/tapasin complexes bind to 1 TAP. Interacts with HLA-G-B2M complex; this interaction is required for loading of high affinity peptides. On its own or as part of MHC class I peptide loading complex, interacts with ligand-free MR1 or MR1-B2M complex, providing for stable MR1 pools ready for metabolite antigen processing.

The protein resides in the endoplasmic reticulum membrane. Functionally, involved in the association of MHC class I with transporter associated with antigen processing (TAP) and in the assembly of MHC class I with peptide (peptide loading). The protein is Tapasin (Tapbp) of Mus musculus (Mouse).